The chain runs to 273 residues: Hydroxyethylthiazole kinase (273 aa).

Met-41 serves as a coordination point for substrate. Arg-117 and Thr-170 together coordinate ATP. Gly-197 is a binding site for substrate.

The protein belongs to the Thz kinase family. Requires Mg(2+) as cofactor.

The enzyme catalyses 5-(2-hydroxyethyl)-4-methylthiazole + ATP = 4-methyl-5-(2-phosphooxyethyl)-thiazole + ADP + H(+). It functions in the pathway cofactor biosynthesis; thiamine diphosphate biosynthesis; 4-methyl-5-(2-phosphoethyl)-thiazole from 5-(2-hydroxyethyl)-4-methylthiazole: step 1/1. Functionally, catalyzes the phosphorylation of the hydroxyl group of 4-methyl-5-beta-hydroxyethylthiazole (THZ). The protein is Hydroxyethylthiazole kinase of Clostridium acetobutylicum (strain ATCC 824 / DSM 792 / JCM 1419 / IAM 19013 / LMG 5710 / NBRC 13948 / NRRL B-527 / VKM B-1787 / 2291 / W).